Consider the following 902-residue polypeptide: Transcription factor E2F7 (902 aa).

Position 96 is a phosphoserine (Ser96). Residues 143 to 212 (RKQKSLGLLC…VAKNQYGWHG (70 aa)) mediate DNA binding. The segment covering 253–269 (ERRKDGSPDPRDQHLLD) has biased composition (basic and acidic residues). Residues 253 to 283 (ERRKDGSPDPRDQHLLDFSESDYPSSSANSR) form a disordered region. The DNA-binding element occupies 283–368 (RKDKSLRIMS…GRKPAFKWIG (86 aa)). Ser411 is subject to Phosphoserine. Disordered regions lie at residues 418–439 (SEKI…KQGP), 589–627 (LCEE…SNST), and 665–690 (NGFI…DNEI). Basic and acidic residues-rich tracts occupy residues 589–611 (LCEE…REFE) and 679–690 (PDTEKSSNDNEI). Ser832 is subject to Phosphoserine. A disordered region spans residues 844–902 (KAEQSPAPATPKSIQRRHRETFFKTPGSLGDPAFRRERNQSRNTSSAQRRLEISSSGPD). The span at 884–902 (SRNTSSAQRRLEISSSGPD) shows a compositional bias: polar residues.

This sequence belongs to the E2F/DP family. As to quaternary structure, homodimer and heterodimer: mainly forms homodimers and, to a lesser extent, heterodimers with E2F8. Dimerization is important for DNA-binding. Interacts with HIF1A. Interacts with MN1.

The protein resides in the nucleus. Its function is as follows. Atypical E2F transcription factor that participates in various processes such as angiogenesis, polyploidization of specialized cells and DNA damage response. Mainly acts as a transcription repressor that binds DNA independently of DP proteins and specifically recognizes the E2 recognition site 5'-TTTC[CG]CGC-3'. Directly represses transcription of classical E2F transcription factors such as E2F1. Acts as a regulator of S-phase by recognizing and binding the E2-related site 5'-TTCCCGCC-3' and mediating repression of G1/S-regulated genes. Plays a key role in polyploidization of cells in placenta and liver by regulating the endocycle, probably by repressing genes promoting cytokinesis and antagonizing action of classical E2F proteins (E2F1, E2F2 and/or E2F3). Required for placental development by promoting polyploidization of trophoblast giant cells. Also involved in DNA damage response: up-regulated by p53/TP53 following genotoxic stress and acts as a downstream effector of p53/TP53-dependent repression by mediating repression of indirect p53/TP53 target genes involved in DNA replication. Acts as a promoter of sprouting angiogenesis, possibly by acting as a transcription activator: associates with HIF1A, recognizes and binds the VEGFA promoter, which is different from canonical E2 recognition site, and activates expression of the VEGFA gene. Acts as a negative regulator of keratinocyte differentiation. This chain is Transcription factor E2F7 (E2f7), found in Rattus norvegicus (Rat).